Reading from the N-terminus, the 296-residue chain is uncharacterized protein (296 aa).

Positions 1 to 60 (MDPKISYFQTFIVASKTKSFSKAAKRLGITQGTVSNHISALEKYFDAQLFLRTPEGVDLT) constitute an HTH lysR-type domain. The H-T-H motif DNA-binding region spans 20–39 (FSKAAKRLGITQGTVSNHIS).

The protein belongs to the LysR transcriptional regulatory family.

This is an uncharacterized protein from Methanocaldococcus jannaschii (strain ATCC 43067 / DSM 2661 / JAL-1 / JCM 10045 / NBRC 100440) (Methanococcus jannaschii).